We begin with the raw amino-acid sequence, 34 residues long: Cytochrome b6-f complex subunit 8 (34 aa).

The helical transmembrane segment at 3–23 (LLTFGWAALLAVFTFSLAMVV) threads the bilayer.

Belongs to the PetN family. The 4 large subunits of the cytochrome b6-f complex are cytochrome b6, subunit IV (17 kDa polypeptide, PetD), cytochrome f and the Rieske protein, while the 4 small subunits are PetG, PetL, PetM and PetN. The complex functions as a dimer.

The protein resides in the cellular thylakoid membrane. Functionally, component of the cytochrome b6-f complex, which mediates electron transfer between photosystem II (PSII) and photosystem I (PSI), cyclic electron flow around PSI, and state transitions. The sequence is that of Cytochrome b6-f complex subunit 8 from Synechococcus elongatus (strain ATCC 33912 / PCC 7942 / FACHB-805) (Anacystis nidulans R2).